The primary structure comprises 220 residues: Metalloproteinase inhibitor 2 (220 aa).

The signal sequence occupies residues 1–26 (MGAAARSLPLAFCLLLLGTLLPRADA). Cys27 provides a ligand contact to Zn(2+). Residues 27-30 (CSCS) are involved in metalloproteinase-binding. Disulfide bonds link Cys27–Cys98, Cys29–Cys127, Cys39–Cys152, Cys154–Cys201, Cys159–Cys164, and Cys172–Cys193. Residues 27–152 (CSCSPVHPQQ…SLNHRYQMGC (126 aa)) form the NTR domain.

Belongs to the protease inhibitor I35 (TIMP) family. As to quaternary structure, interacts (via the C-terminal) with MMP2 (via the C-terminal PEX domain); the interaction inhibits the MMP2 activity. Post-translationally, the activity of TIMP2 is dependent on the presence of disulfide bonds.

The protein resides in the secreted. Complexes with metalloproteinases (such as collagenases) and irreversibly inactivates them by binding to their catalytic zinc cofactor. In Bos taurus (Bovine), this protein is Metalloproteinase inhibitor 2 (TIMP2).